A 358-amino-acid polypeptide reads, in one-letter code: 3-dehydroquinate synthase (358 aa).

NAD(+) is bound by residues 70 to 75, 104 to 108, 128 to 129, Lys141, and Lys150; these read DGEAHK, GVIGD, and TT. Glu183, His246, and His263 together coordinate Zn(2+).

This sequence belongs to the sugar phosphate cyclases superfamily. Dehydroquinate synthase family. NAD(+) serves as cofactor. Co(2+) is required as a cofactor. The cofactor is Zn(2+).

The protein localises to the cytoplasm. The catalysed reaction is 7-phospho-2-dehydro-3-deoxy-D-arabino-heptonate = 3-dehydroquinate + phosphate. The protein operates within metabolic intermediate biosynthesis; chorismate biosynthesis; chorismate from D-erythrose 4-phosphate and phosphoenolpyruvate: step 2/7. In terms of biological role, catalyzes the conversion of 3-deoxy-D-arabino-heptulosonate 7-phosphate (DAHP) to dehydroquinate (DHQ). The polypeptide is 3-dehydroquinate synthase (Bordetella bronchiseptica (strain ATCC BAA-588 / NCTC 13252 / RB50) (Alcaligenes bronchisepticus)).